We begin with the raw amino-acid sequence, 177 residues long: ATP synthase subunit delta (177 aa).

It belongs to the ATPase delta chain family. In terms of assembly, F-type ATPases have 2 components, F(1) - the catalytic core - and F(0) - the membrane proton channel. F(1) has five subunits: alpha(3), beta(3), gamma(1), delta(1), epsilon(1). F(0) has three main subunits: a(1), b(2) and c(10-14). The alpha and beta chains form an alternating ring which encloses part of the gamma chain. F(1) is attached to F(0) by a central stalk formed by the gamma and epsilon chains, while a peripheral stalk is formed by the delta and b chains.

It is found in the cell inner membrane. F(1)F(0) ATP synthase produces ATP from ADP in the presence of a proton or sodium gradient. F-type ATPases consist of two structural domains, F(1) containing the extramembraneous catalytic core and F(0) containing the membrane proton channel, linked together by a central stalk and a peripheral stalk. During catalysis, ATP synthesis in the catalytic domain of F(1) is coupled via a rotary mechanism of the central stalk subunits to proton translocation. In terms of biological role, this protein is part of the stalk that links CF(0) to CF(1). It either transmits conformational changes from CF(0) to CF(1) or is implicated in proton conduction. This chain is ATP synthase subunit delta, found in Shigella flexneri.